The primary structure comprises 379 residues: cAMP-dependent protein kinase type I-alpha regulatory subunit (379 aa).

M1 is subject to N-acetylmethionine. The tract at residues 1-134 (MASSSTSSEE…ALAKAIEKNV (134 aa)) is dimerization and phosphorylation. The segment at 63–93 (QMVSQQKSSSRSDSREDEVSPPMNPVVKGRR) is disordered. Positions 94–98 (RRGAI) match the Pseudophosphorylation motif motif. Residues 135-252 (LFAH…SKVS), E200, R209, 253-379 (ILES…SLSV), E324, and R333 contribute to the 3',5'-cyclic AMP site.

This sequence belongs to the cAMP-dependent kinase regulatory chain family. The inactive holoenzyme is composed of two regulatory chains and two catalytic chains. Activation by cAMP releases the two active catalytic monomers and the regulatory dimer. Interacts with PRKACA and PRKACB. Interacts with PRRC1; resulting in PKA activation. Post-translationally, the pseudophosphorylation site binds to the substrate-binding region of the catalytic chain, resulting in the inhibition of its activity.

The protein localises to the cell membrane. In terms of biological role, regulatory subunit of the cAMP-dependent protein kinases involved in cAMP signaling in cells. This Danio rerio (Zebrafish) protein is cAMP-dependent protein kinase type I-alpha regulatory subunit (prkar1aa).